Reading from the N-terminus, the 454-residue chain is Sensor histidine kinase YkoH (454 aa).

The Cytoplasmic segment spans residues 1-12; it reads MKLKTKIHLYTS. Residues 13–33 form a helical membrane-spanning segment; it reads ISLLILLILVHTAVYLIFSSA. Residues 34 to 153 are Extracellular-facing; it reads LTSKDAARLA…NTEESLFLLK (120 aa). Residues 154 to 174 form a helical membrane-spanning segment; it reads IILIAASAAVCIASFFAGSLL. The Cytoplasmic portion of the chain corresponds to 175–454; that stretch reads ARRIINPIRR…QFSEQNGGGR (280 aa). The region spanning 176–230 is the HAMP domain; the sequence is RRIINPIRRLMITMKDIQRDKEFKTISLEGQSNDELYQMGLTFNEMAMMLKEHYD. The Histidine kinase domain maps to 238 to 450; the sequence is DASHELKTPL…AVTMQFSEQN (213 aa). H241 carries the post-translational modification Phosphohistidine; by autocatalysis.

The protein resides in the cell membrane. It carries out the reaction ATP + protein L-histidine = ADP + protein N-phospho-L-histidine.. Its function is as follows. Probable member of the two-component regulatory system YkoH/YkoG. Potentially phosphorylates YkoG. The chain is Sensor histidine kinase YkoH (ykoH) from Bacillus subtilis (strain 168).